A 532-amino-acid polypeptide reads, in one-letter code: Probable cytochrome c oxidase subunit 1 (532 aa).

Helical transmembrane passes span Ile-33–Phe-53, Val-74–Gly-94, Gly-95–Leu-115, Ile-118–Gly-138, Met-163–Ile-183, Pro-200–Leu-220, Leu-252–Val-272, and Ile-284–Val-304. His-79 is a binding site for Fe(II)-heme a. Positions 258 and 262 each coordinate Cu cation. Residues His-307 and His-308 each contribute to the Cu cation site. Transmembrane regions (helical) follow at residues Ala-318 to Phe-338 and Met-355 to Leu-375. His-393 serves as a coordination point for heme a3. 3 helical membrane-spanning segments follow: residues Phe-394 to Phe-414, Phe-431 to Ala-451, and Ile-473 to Leu-493. His-395 contributes to the Fe(II)-heme a binding site.

It belongs to the heme-copper respiratory oxidase family.

It localises to the cell membrane. The enzyme catalyses 4 Fe(II)-[cytochrome c] + O2 + 8 H(+)(in) = 4 Fe(III)-[cytochrome c] + 2 H2O + 4 H(+)(out). Its pathway is energy metabolism; oxidative phosphorylation. Functionally, cytochrome c oxidase is the component of the respiratory chain that catalyzes the reduction of oxygen to water. Subunits 1-3 form the functional core of the enzyme complex. CO I is the catalytic subunit of the enzyme. Electrons originating in cytochrome c are transferred via the copper A center of subunit 2 and heme A of subunit 1 to the bimetallic center formed by heme A3 and copper B. This Rickettsia conorii (strain ATCC VR-613 / Malish 7) protein is Probable cytochrome c oxidase subunit 1 (ctaD).